The chain runs to 1363 residues: Vascular endothelial growth factor receptor 3 (1363 aa).

The N-terminal stretch at 1–24 (MQPGAALNRRLWLCLGLLQGLANG) is a signal peptide. Over 25 to 775 (YSMTPPTLNI…EGSEDKGSME (751 aa)) the chain is Extracellular. Residues N33, N104, N166, N251, N299, and N411 are each glycosylated (N-linked (GlcNAc...) asparagine). 7 Ig-like C2-type domains span residues 44 to 118 (GDSL…YIKA), 151 to 213 (KDSM…WGDQ), 230 to 326 (YDIQ…TEVI), 331 to 415 (PFIS…ISLE), 422 to 552 (PHIH…FYVT), 555 to 671 (PDGF…KYLS), and 678 to 764 (PRLT…ASVA). 2 disulfide bridges follow: C51/C111 and C158/C206. C252 and C310 form a disulfide bridge. 3 disulfide bridges follow: C445–C534, C466–C486, and C578–C653. N-linked (GlcNAc...) asparagine glycosylation is found at N515, N527, N582, N594, and N683. C699 and C751 are oxidised to a cystine. N758 carries N-linked (GlcNAc...) asparagine glycosylation. A helical transmembrane segment spans residues 776-796 (IVILIGTGVIAVFFWVLLLLI). Over 797 to 1363 (FCNMKRPAHA…GSTFFADSNY (567 aa)) the chain is Cytoplasmic. Residues Y830 and Y833 each carry the phosphotyrosine; by SRC modification. In terms of domain architecture, Protein kinase spans 845-1173 (LHLGRVLGHG…DLVEILGDLL (329 aa)). Residues 851 to 859 (LGHGAFGKV) and K879 contribute to the ATP site. Catalysis depends on D1037, which acts as the Proton acceptor. At Y1063 the chain carries Phosphotyrosine; by autocatalysis and SRC. Residues Y1068, Y1230, Y1231, and Y1265 each carry the phosphotyrosine; by autocatalysis modification. Basic and acidic residues predominate over residues 1289 to 1317 (SRHRQEGSFSRKDPGQHMDISRGHPDLQG). The segment at 1289 to 1330 (SRHRQEGSFSRKDPGQHMDISRGHPDLQGRRRRPTQGAQGGK) is disordered. 2 positions are modified to phosphotyrosine; by autocatalysis and SRC: Y1333 and Y1337. Y1363 carries the post-translational modification Phosphotyrosine; by autocatalysis.

The protein belongs to the protein kinase superfamily. Tyr protein kinase family. CSF-1/PDGF receptor subfamily. In terms of assembly, interacts with VEGFC and VEGFD. Monomer in the absence of bound VEGFC or VEGFD. Homodimer in the presence of bound VEGFC or VEGFD. Can also form a heterodimer with KDR. Interacts with PTPN14; the interaction is enhanced by stimulation with VEGFC. Interacts with CRK, GRB2, PTK2/FAK1, SHC1, PIK3R1 and PTPN11/SHP-2. Identified in a complex with SRC and ITGB1. Identified in a complex with SRC and ITGB1. In terms of processing, autophosphorylated on tyrosine residues upon ligand binding. Autophosphorylation occurs in trans, i.e. one subunit of the dimeric receptor phosphorylates tyrosine residues on the other subunit. Phosphorylation in response to H(2)O(2) is mediated by a process that requires SRC and PRKCD activity. Phosphorylation at Tyr-1068 is required for autophosphorylation at additional tyrosine residues. Phosphorylation at Tyr-1063 and Tyr-1337 is important for interaction with CRK and subsequent activation of MAPK8. Phosphorylation at Tyr-1230, Tyr-1231 and Tyr-1337 is important for interaction with GRB2 and subsequent activation of the AKT1 and MAPK1/ERK2 and/or MAPK3/ERK1 signaling pathways. In response to endothelial cell adhesion onto collagen, can also be phosphorylated in the absence of FLT4 kinase activity by SRC.

It localises to the cell membrane. Its subcellular location is the cytoplasm. It is found in the nucleus. It carries out the reaction L-tyrosyl-[protein] + ATP = O-phospho-L-tyrosyl-[protein] + ADP + H(+). Present in an inactive conformation in the absence of bound ligand. Binding of VEGFC or VEGFD leads to dimerization and activation by autophosphorylation on tyrosine residues. Functionally, tyrosine-protein kinase that acts as a cell-surface receptor for VEGFC and VEGFD, and plays an essential role in adult lymphangiogenesis and in the development of the vascular network and the cardiovascular system during embryonic development. Promotes proliferation, survival and migration of endothelial cells, and regulates angiogenic sprouting. Signaling by activated FLT4 leads to enhanced production of VEGFC, and to a lesser degree VEGFA, thereby creating a positive feedback loop that enhances FLT4 signaling. Modulates KDR signaling by forming heterodimers. Mediates activation of the MAPK1/ERK2, MAPK3/ERK1 signaling pathway, of MAPK8 and the JUN signaling pathway, and of the AKT1 signaling pathway. Phosphorylates SHC1. Mediates phosphorylation of PIK3R1, the regulatory subunit of phosphatidylinositol 3-kinase. Promotes phosphorylation of MAPK8 at 'Thr-183' and 'Tyr-185', and of AKT1 at 'Ser-473'. This is Vascular endothelial growth factor receptor 3 (Flt4) from Rattus norvegicus (Rat).